Here is a 447-residue protein sequence, read N- to C-terminus: Trigger factor (447 aa).

Positions 159–244 (GDMLLMQVES…VREIKEEKLP (86 aa)) constitute a PPIase FKBP-type domain.

This sequence belongs to the FKBP-type PPIase family. Tig subfamily.

The protein resides in the cytoplasm. The enzyme catalyses [protein]-peptidylproline (omega=180) = [protein]-peptidylproline (omega=0). Its function is as follows. Involved in protein export. Acts as a chaperone by maintaining the newly synthesized protein in an open conformation. Functions as a peptidyl-prolyl cis-trans isomerase. In Dehalococcoides mccartyi (strain CBDB1), this protein is Trigger factor.